The primary structure comprises 416 residues: Alpha-1-antiproteinase (416 aa).

The N-terminal stretch at 1-24 (MALSITRGLLLLAALCCLAPISLA) is a signal peptide. Residues asparagine 68, asparagine 105, asparagine 143, and asparagine 269 are each glycosylated (N-linked (GlcNAc...) asparagine). The tract at residues 371–390 (GSTFLEAIPMSLPPDVEFNR) is RCL. A Phosphoserine modification is found at serine 381.

It belongs to the serpin family. Interacts with CELA2A. Interacts with ERGIC3 and LMAN1/ERGIC53. Interacts with PRSS1/Trypsin. As to expression, plasma.

The protein localises to the secreted. Its function is as follows. Inhibitor of serine proteases. Its primary target is elastase, but it also has a moderate affinity for plasmin and thrombin. Inhibits trypsin, chymotrypsin and plasminogen activator. This chain is Alpha-1-antiproteinase (SERPINA1), found in Bos taurus (Bovine).